The primary structure comprises 217 residues: Adenylate kinase (217 aa).

10–15 (GAGKGT) contributes to the ATP binding site. The tract at residues 30–59 (STGDMLRAAVKAGTPLGLEAKKVMDSGGLV) is NMP. Residues T31, R36, 57–59 (GLV), 85–88 (GFPR), and Q92 contribute to the AMP site. The segment at 122-159 (GRRVHVASGRTYHVKFNPPKVAGVDDVTGEPLIQRDDD) is LID. ATP-binding positions include R123 and 132-133 (TY). Positions 156 and 167 each coordinate AMP. Residue G203 participates in ATP binding.

The protein belongs to the adenylate kinase family. As to quaternary structure, monomer.

Its subcellular location is the cytoplasm. The enzyme catalyses AMP + ATP = 2 ADP. The protein operates within purine metabolism; AMP biosynthesis via salvage pathway; AMP from ADP: step 1/1. Catalyzes the reversible transfer of the terminal phosphate group between ATP and AMP. Plays an important role in cellular energy homeostasis and in adenine nucleotide metabolism. The chain is Adenylate kinase from Methylibium petroleiphilum (strain ATCC BAA-1232 / LMG 22953 / PM1).